The sequence spans 515 residues: 1-pyrroline-5-carboxylate dehydrogenase (515 aa).

Residues glutamate 286 and cysteine 320 contribute to the active site.

Belongs to the aldehyde dehydrogenase family. RocA subfamily.

It catalyses the reaction L-glutamate 5-semialdehyde + NAD(+) + H2O = L-glutamate + NADH + 2 H(+). It functions in the pathway amino-acid degradation; L-proline degradation into L-glutamate; L-glutamate from L-proline: step 2/2. This is 1-pyrroline-5-carboxylate dehydrogenase from Bacillus anthracis (strain A0248).